The sequence spans 556 residues: Beta-hexosaminidase subunit beta (556 aa).

The signal sequence occupies residues 1-42 (MELCGLGLPRPPMLLALLLATLLAAMLALLTQVALVVQVAEA). Positions 43 to 121 (ARAPSVSAKP…HHEPAEFQAK (79 aa)) are excised as a propeptide. N-linked (GlcNAc...) asparagine glycosylation occurs at asparagine 84. Cysteine 91 and cysteine 137 are disulfide-bonded. 3 N-linked (GlcNAc...) asparagine glycosylation sites follow: asparagine 142, asparagine 190, and asparagine 327. Intrachain disulfides connect cysteine 309–cysteine 360 and cysteine 534–cysteine 551. Glutamate 355 acts as the Proton donor in catalysis.

It belongs to the glycosyl hydrolase 20 family. As to quaternary structure, there are 3 forms of beta-hexosaminidase: hexosaminidase A is a heterodimer composed of one subunit alpha and one subunit beta (chain A and B); hexosaminidase B is a homodimer of two beta subunits (two chains A and B); hexosaminidase S is a homodimer of two alpha subunits. The composition of the dimer (isozyme A versus isozyme S) has a significant effect on the substrate specificity of the alpha subunit active site. Post-translationally, N-linked glycans at Asn-142 and Asn-190 consist of Man(3)-GlcNAc(2) and Man(5 to 7)-GlcNAc(2), respectively. In terms of processing, the beta-A and beta-B chains are produced by proteolytic processing of the precursor beta chain.

It is found in the lysosome. The protein resides in the cytoplasmic vesicle. Its subcellular location is the secretory vesicle. It localises to the cortical granule. It catalyses the reaction Hydrolysis of terminal non-reducing N-acetyl-D-hexosamine residues in N-acetyl-beta-D-hexosaminides.. The enzyme catalyses N-acetyl-beta-D-galactosaminyl-(1-&gt;4)-beta-D-3-sulfogalactosyl-(1-&gt;4)-beta-D-glucosyl-(1&lt;-&gt;1')-ceramide + H2O = a beta-D-3-sulfogalactosyl-(1-&gt;4)-beta-D-glucosyl-(1&lt;-&gt;1')-ceramide + N-acetyl-beta-D-galactosamine. It carries out the reaction a ganglioside GM2 (d18:1(4E)) + H2O = a ganglioside GM3 (d18:1(4E)) + N-acetyl-beta-D-galactosamine. The catalysed reaction is a ganglioside GM2 + H2O = a ganglioside GM3 + N-acetyl-beta-D-galactosamine. It catalyses the reaction beta-D-GalNAc-(1-&gt;4)-alpha-L-IdoA-(1-&gt;3)-beta-D-GalNAc-4-sulfate-(1-&gt;4)-alpha-L-IdoA-(1-&gt;3)-D-GalNAc-4-sulfate + H2O = alpha-L-IdoA-(1-&gt;3)-beta-D-GalNAc-4-sulfate-(1-&gt;4)-alpha-L-IdoA-(1-&gt;3)-D-GalNAc-4-sulfate + N-acetyl-D-galactosamine. The enzyme catalyses N-acetyl-beta-D-6-sulfogalactosaminyl-(1-&gt;4)-alpha-L-iduronyl-(1-&gt;3)-N-acetyl-D-6-sulfogalactosamine + H2O = alpha-L-iduronyl-(1-&gt;3)-N-acetyl-D-6-sulfogalactosamine + N-acetyl-D-6-sulfogalactosamine. Addition of GM2A stimulates the hydrolysis of sulfated glycosphingolipid SM2 and the ganglioside GM2. In terms of biological role, hydrolyzes the non-reducing end N-acetyl-D-hexosamine and/or sulfated N-acetyl-D-hexosamine of glycoconjugates, such as the oligosaccharide moieties from proteins and neutral glycolipids, or from certain mucopolysaccharides. The isozyme B does not hydrolyze each of these substrates, however hydrolyzes efficiently neutral oligosaccharide. Only the isozyme A is responsible for the degradation of GM2 gangliosides in the presence of GM2A. During fertilization is responsible, at least in part, for the zona block to polyspermy. Present in the cortical granules of non-activated oocytes, is exocytosed during the cortical reaction in response to oocyte activation and inactivates the sperm galactosyltransferase-binding site, accounting for the block in sperm binding to the zona pellucida. The chain is Beta-hexosaminidase subunit beta from Homo sapiens (Human).